The following is a 100-amino-acid chain: Integration host factor subunit alpha (100 aa).

A disordered region spans residues 53–72; the sequence is FQLRDKPQRPGRNPKTGEEV.

It belongs to the bacterial histone-like protein family. As to quaternary structure, heterodimer of an alpha and a beta chain.

In terms of biological role, this protein is one of the two subunits of integration host factor, a specific DNA-binding protein that functions in genetic recombination as well as in transcriptional and translational control. In Neisseria meningitidis serogroup C (strain 053442), this protein is Integration host factor subunit alpha.